A 493-amino-acid polypeptide reads, in one-letter code: 11S globulin seed storage protein G3 (493 aa).

An N-terminal signal peptide occupies residues 1 to 20; that stretch reads MASKATLLLAFTLLFATCIA. 2 disulfides stabilise this stretch: C32–C65 and C103–C312. The Cupin type-1 1 domain maps to 37-248; sequence IEALEPIEVI…SFNVDQETAQ (212 aa). Disordered stretches follow at residues 190 to 229 and 269 to 305; these read PQAQ…NIFN and IVRP…GWSN. 2 stretches are compositionally biased toward low complexity: residues 191–221 and 280–298; these read QAQA…QGQG and RQQQ…QQQG. Residues 318–467 form the Cupin type-1 2 domain; sequence VNIDNPSQAD…RYQLSREEAQ (150 aa).

This sequence belongs to the 11S seed storage protein (globulins) family. Hexamer; each subunit is composed of an acidic and a basic chain derived from a single precursor and linked by a disulfide bond.

In terms of biological role, this is a seed storage protein. The polypeptide is 11S globulin seed storage protein G3 (HAG3) (Helianthus annuus (Common sunflower)).